Consider the following 85-residue polypeptide: uncharacterized protein (85 aa).

The tract at residues 35-85 (SDKDAPFSTQALTRSKSKRKRSALPVANGLKKPTRSIKRPSRGERLSATTI) is disordered.

This is an uncharacterized protein from Pasteurella multocida (strain Pm70).